Here is a 197-residue protein sequence, read N- to C-terminus: NADH-quinone oxidoreductase subunit C (197 aa).

Belongs to the complex I 30 kDa subunit family. NDH-1 is composed of 14 different subunits. Subunits NuoB, C, D, E, F, and G constitute the peripheral sector of the complex.

It is found in the cell inner membrane. It carries out the reaction a quinone + NADH + 5 H(+)(in) = a quinol + NAD(+) + 4 H(+)(out). Functionally, NDH-1 shuttles electrons from NADH, via FMN and iron-sulfur (Fe-S) centers, to quinones in the respiratory chain. The immediate electron acceptor for the enzyme in this species is believed to be ubiquinone. Couples the redox reaction to proton translocation (for every two electrons transferred, four hydrogen ions are translocated across the cytoplasmic membrane), and thus conserves the redox energy in a proton gradient. This Neisseria meningitidis serogroup B (strain ATCC BAA-335 / MC58) protein is NADH-quinone oxidoreductase subunit C.